A 448-amino-acid polypeptide reads, in one-letter code: Probable ribonuclease FAU-1 (448 aa).

This sequence belongs to the FAU-1 family.

Probable RNase involved in rRNA stability through maturation and/or degradation of precursor rRNAs. Binds to RNA in loop regions with AU-rich sequences. This chain is Probable ribonuclease FAU-1, found in Pyrobaculum calidifontis (strain DSM 21063 / JCM 11548 / VA1).